The sequence spans 85 residues: Putative membrane protein insertion efficiency factor (85 aa).

This sequence belongs to the UPF0161 family.

It localises to the cell inner membrane. Could be involved in insertion of integral membrane proteins into the membrane. The protein is Putative membrane protein insertion efficiency factor of Escherichia fergusonii (strain ATCC 35469 / DSM 13698 / CCUG 18766 / IAM 14443 / JCM 21226 / LMG 7866 / NBRC 102419 / NCTC 12128 / CDC 0568-73).